The following is a 187-amino-acid chain: Putative zinc finger protein 833 (187 aa).

6 C2H2-type zinc fingers span residues 10-32 (YKCK…ERTH), 38-60 (YECN…ARIH), 66-88 (YICK…ENTH), 94-116 (CECK…ERIH), 122-144 (YKCK…KSTH), and 150-172 (YECK…EGVH).

This is Putative zinc finger protein 833 (ZNF833P) from Homo sapiens (Human).